Reading from the N-terminus, the 403-residue chain is Tryptophan synthase beta chain (403 aa).

K88 carries the N6-(pyridoxal phosphate)lysine modification.

This sequence belongs to the TrpB family. Tetramer of two alpha and two beta chains. It depends on pyridoxal 5'-phosphate as a cofactor.

The enzyme catalyses (1S,2R)-1-C-(indol-3-yl)glycerol 3-phosphate + L-serine = D-glyceraldehyde 3-phosphate + L-tryptophan + H2O. It functions in the pathway amino-acid biosynthesis; L-tryptophan biosynthesis; L-tryptophan from chorismate: step 5/5. The beta subunit is responsible for the synthesis of L-tryptophan from indole and L-serine. This Shewanella frigidimarina (strain NCIMB 400) protein is Tryptophan synthase beta chain.